The chain runs to 274 residues: Large ribosomal subunit protein uL2cz/uL2cy (274 aa).

A compositionally biased stretch (polar residues) spans 1–15 (MAINLYKTSTPSTRN). Disordered stretches follow at residues 1–22 (MAINLYKTSTPSTRNGAVDSQV) and 225–274 (PVDH…RRSK).

This sequence belongs to the universal ribosomal protein uL2 family. Part of the 50S ribosomal subunit.

It is found in the plastid. Its subcellular location is the chloroplast. The sequence is that of Large ribosomal subunit protein uL2cz/uL2cy (rpl2-A) from Lobularia maritima (Sweet alyssum).